The sequence spans 75 residues: Alpha-amylase inhibitor Paim-2 (75 aa).

Intrachain disulfides connect C10–C26 and C44–C72.

Its function is as follows. Inhibits mammalian alpha-amylases specifically but has no action on plant and microbial alpha-amylases. The sequence is that of Alpha-amylase inhibitor Paim-2 from Streptomyces olivaceoviridis (Streptomyces corchorusii).